Here is a 245-residue protein sequence, read N- to C-terminus: 23S rRNA (guanosine-2'-O-)-methyltransferase RlmB (245 aa).

S-adenosyl-L-methionine is bound by residues glycine 197, isoleucine 217, and leucine 226.

The protein belongs to the class IV-like SAM-binding methyltransferase superfamily. RNA methyltransferase TrmH family. RlmB subfamily.

The protein resides in the cytoplasm. It carries out the reaction guanosine(2251) in 23S rRNA + S-adenosyl-L-methionine = 2'-O-methylguanosine(2251) in 23S rRNA + S-adenosyl-L-homocysteine + H(+). Specifically methylates the ribose of guanosine 2251 in 23S rRNA. This chain is 23S rRNA (guanosine-2'-O-)-methyltransferase RlmB, found in Bordetella parapertussis (strain 12822 / ATCC BAA-587 / NCTC 13253).